The chain runs to 306 residues: Agmatinase (306 aa).

6 residues coordinate Mn(2+): histidine 126, aspartate 149, histidine 151, aspartate 153, aspartate 230, and aspartate 232.

It belongs to the arginase family. Agmatinase subfamily. Requires Mn(2+) as cofactor.

The enzyme catalyses agmatine + H2O = urea + putrescine. It participates in amine and polyamine biosynthesis; putrescine biosynthesis via agmatine pathway; putrescine from agmatine: step 1/1. Catalyzes the formation of putrescine from agmatine. This is Agmatinase from Salmonella agona (strain SL483).